The sequence spans 613 residues: Transcription factor Sp2 (613 aa).

Residues 1–32 (MSDPQTSMAATAAVSPSDYLQPAASTTQDSQP) form a disordered region. Positions 23-32 (AASTTQDSQP) are enriched in polar residues. S78 carries the phosphoserine modification. 2 disordered regions span residues 170–197 (SPSS…AQSG) and 225–255 (PGAA…LPAA). Residues 185-197 (QKSSTTTTPAQSG) show a composition bias toward polar residues. Positions 361-369 (GEVQTVLVQ) match the 9aaTAD; inactive motif. Over residues 374-392 (ATAATASTTTCSSPASRAA) the composition is skewed to low complexity. A disordered region spans residues 374-402 (ATAATASTTTCSSPASRAAHLSGTSKKHS). 3 consecutive C2H2-type zinc fingers follow at residues 525–549 (HVCH…VRLH), 555–579 (FVCN…ARTH), and 585–607 (FECA…YKTH).

Belongs to the Sp1 C2H2-type zinc-finger protein family.

It is found in the nucleus. Functionally, binds to GC box promoters elements and selectively activates mRNA synthesis from genes that contain functional recognition sites. This chain is Transcription factor Sp2 (SP2), found in Bos taurus (Bovine).